Reading from the N-terminus, the 464-residue chain is E3 ubiquitin-protein ligase MYLIP-B (464 aa).

One can recognise an FERM domain in the interval 1-279; sequence MLCHITRPDS…EIHAFYRCDT (279 aa). The segment at 381–416 adopts an RING-type zinc-finger fold; that stretch reads CALCCEQEISAAFCPCGHMFCCYNCASQLQCCPVCR.

Interacts with anxa5.

The protein resides in the cytoplasm. Its subcellular location is the cytosol. It catalyses the reaction S-ubiquitinyl-[E2 ubiquitin-conjugating enzyme]-L-cysteine + [acceptor protein]-L-lysine = [E2 ubiquitin-conjugating enzyme]-L-cysteine + N(6)-ubiquitinyl-[acceptor protein]-L-lysine.. The protein operates within protein modification; protein ubiquitination. Its function is as follows. E3 ubiquitin-protein ligase that mediates ubiquitination and subsequent proteasomal degradation of myosin regulatory light chain (MRLC). Regulates cell movements during gastrulation by acting downstream of fz7 to antagonize the frizzled-signaling pathway. In Danio rerio (Zebrafish), this protein is E3 ubiquitin-protein ligase MYLIP-B.